We begin with the raw amino-acid sequence, 61 residues long: Small ribosomal subunit protein uS14 (61 aa).

Zn(2+) is bound by residues C24, C27, C40, and C43.

The protein belongs to the universal ribosomal protein uS14 family. Zinc-binding uS14 subfamily. Part of the 30S ribosomal subunit. Contacts proteins S3 and S10. Zn(2+) is required as a cofactor.

Binds 16S rRNA, required for the assembly of 30S particles and may also be responsible for determining the conformation of the 16S rRNA at the A site. This Mycobacterium avium (strain 104) protein is Small ribosomal subunit protein uS14.